A 375-amino-acid chain; its full sequence is F-box/kelch-repeat protein At4g39240 (375 aa).

The span at 1–15 (MPFSAASSSSVSSIA) shows a compositional bias: low complexity. A disordered region spans residues 1–27 (MPFSAASSSSVSSIAEEPPPKKQHDPS). Positions 31 to 77 (SSYLLLLPDEIILNCLARLPKCYYPVISLVSKTFRRLIASPEIYVER) constitute an F-box domain. Kelch repeat units lie at residues 140–186 (EIYV…FFDG), 187–232 (KLYV…RSFA), and 275–321 (KIYT…GNLA).

The polypeptide is F-box/kelch-repeat protein At4g39240 (Arabidopsis thaliana (Mouse-ear cress)).